A 430-amino-acid chain; its full sequence is Tol-Pal system protein TolB (430 aa).

A signal peptide spans M1–A21.

This sequence belongs to the TolB family. The Tol-Pal system is composed of five core proteins: the inner membrane proteins TolA, TolQ and TolR, the periplasmic protein TolB and the outer membrane protein Pal. They form a network linking the inner and outer membranes and the peptidoglycan layer.

It localises to the periplasm. In terms of biological role, part of the Tol-Pal system, which plays a role in outer membrane invagination during cell division and is important for maintaining outer membrane integrity. TolB occupies a key intermediary position in the Tol-Pal system because it communicates directly with both membrane-embedded components, Pal in the outer membrane and TolA in the inner membrane. This is Tol-Pal system protein TolB from Klebsiella pneumoniae (strain 342).